We begin with the raw amino-acid sequence, 587 residues long: MTQINFNASYTSAPTPSRASFDNGYSEFCDKQQPNDYLNYYNNPTPDGADTVVSDSRLQAASNFLASVNSLTDDNDIMECLLKTTDNLGEAVSSAYNAESFELPVAEQPSPSSAYNAESFEHPVGVNQPSATGTKRKLDEYLDDSQSVVGQFNKNKLKPKYKKSTIQSCATLEQTINHNTNICTVASTQEITHYFTNDFAPYLMRFDDNDYNSNRFSDHMSETGYYMFVVKKSEVKPFEIIFAKYVSNVVYEYTNNYYMVDNRVFVVTFDKIRFMISYNLVKETGIEIPHSQDVCNDETAAQNCKKCHFVDVHHTFKAALTSYFNLDMYYAQTTFVTLLQSLGERKCGFLLSKLYEMYQDKNLFTLPIMLSRKESNEIETASNNFFVSPYVSQILKYSESIRKVKFPDNPPNKYVVDNLNLIVNKKSTLTYKYSSVANLLFNNYKYHDNIASNNNAENLKKVKKEDGSMHIVEQYLTQNVDNVKGHNFIVLSFKNEERLTIAKKNEEFYWISGEIKDVDASQVIQKYNRFKHHMFVISKVNRRESTTLHNNLLKLLALILQGLVPLSDAITFAEQKLNCKYKKFEFN.

Belongs to the nucleopolyhedrovirus IE-1 protein family.

Regulatory transcriptional protein, which trans-activates gene expression from early baculovirus promoters. Can also trans-activate its own promoter, suggesting that it is autoregulated during normal infection of insect cells. The polypeptide is Trans-activating transcriptional regulatory protein (IE1) (Bombyx mori nuclear polyhedrosis virus (BmNPV)).